We begin with the raw amino-acid sequence, 508 residues long: Light-independent protochlorophyllide reductase subunit B (508 aa).

Position 36 (aspartate 36) interacts with [4Fe-4S] cluster. The Proton donor role is filled by aspartate 294. 429-430 serves as a coordination point for substrate; that stretch reads GM.

Belongs to the ChlB/BchB/BchZ family. As to quaternary structure, protochlorophyllide reductase is composed of three subunits; ChlL, ChlN and ChlB. Forms a heterotetramer of two ChlB and two ChlN subunits. Requires [4Fe-4S] cluster as cofactor.

The catalysed reaction is chlorophyllide a + oxidized 2[4Fe-4S]-[ferredoxin] + 2 ADP + 2 phosphate = protochlorophyllide a + reduced 2[4Fe-4S]-[ferredoxin] + 2 ATP + 2 H2O. It participates in porphyrin-containing compound metabolism; chlorophyll biosynthesis (light-independent). Its function is as follows. Component of the dark-operative protochlorophyllide reductase (DPOR) that uses Mg-ATP and reduced ferredoxin to reduce ring D of protochlorophyllide (Pchlide) to form chlorophyllide a (Chlide). This reaction is light-independent. The NB-protein (ChlN-ChlB) is the catalytic component of the complex. The sequence is that of Light-independent protochlorophyllide reductase subunit B from Nostoc sp. (strain PCC 7120 / SAG 25.82 / UTEX 2576).